The chain runs to 193 residues: Ribonuclease HII (193 aa).

Positions 15–193 constitute an RNase H type-2 domain; that stretch reads YIVAGIDEAG…PYHRRSFKCC (179 aa). The a divalent metal cation site is built by Asp-21, Glu-22, and Asp-112.

The protein belongs to the RNase HII family. Mn(2+) is required as a cofactor. Mg(2+) serves as cofactor.

The protein resides in the cytoplasm. The enzyme catalyses Endonucleolytic cleavage to 5'-phosphomonoester.. Its function is as follows. Endonuclease that specifically degrades the RNA of RNA-DNA hybrids. In Rickettsia felis (strain ATCC VR-1525 / URRWXCal2) (Rickettsia azadi), this protein is Ribonuclease HII.